A 610-amino-acid chain; its full sequence is ESX-5 secretion system protein EccA5 (610 aa).

An ATP-binding site is contributed by G357–T364.

Belongs to the CbxX/CfxQ family. Part of the ESX-5 / type VII secretion system (T7SS), which is composed of cytosolic and membrane components.

The protein localises to the cytoplasm. Its function is as follows. Part of an ESX-5 / type VII specialized secretion system (T7SS), which exports several proteins. EccA5 exhibits ATPase activity and may provide energy for the export of ESX-5 substrates. In Mycobacterium bovis (strain ATCC BAA-935 / AF2122/97), this protein is ESX-5 secretion system protein EccA5.